A 139-amino-acid chain; its full sequence is uncharacterized protein (139 aa).

The disordered stretch occupies residues 1 to 26; the sequence is MQLVREKRGAHQHVPRKTTEPQKVRG. The span at 17-26 shows a compositional bias: basic and acidic residues; it reads KTTEPQKVRG.

This is an uncharacterized protein from Ictalurid herpesvirus 1 (strain Auburn) (IcHV-1).